Consider the following 342-residue polypeptide: L-lysine 2,3-aminomutase (342 aa).

The region spanning 106–329 is the Radical SAM core domain; the sequence is HKYHNRALLL…PKLAREIGGE (224 aa). Positions 120, 124, and 127 each coordinate [4Fe-4S] cluster. Lys332 is modified (N6-(pyridoxal phosphate)lysine).

The protein belongs to the radical SAM superfamily. KamA family. [4Fe-4S] cluster is required as a cofactor. The cofactor is pyridoxal 5'-phosphate.

The catalysed reaction is L-lysine = D-beta-lysine. With EpmA is involved in the beta-lysylation step of the post-translational modification of translation elongation factor P (EF-P) on 'Lys-34'. EpmB appears to act before EpmA. Displays lysine 2,3-aminomutase activity, producing (R)-beta-lysine from (S)-alpha-lysine (L-lysine). Cannot use (S)-ornithine or (R)-alpha-lysine as a substrate. The chain is L-lysine 2,3-aminomutase (epmB) from Escherichia coli (strain K12).